Here is a 485-residue protein sequence, read N- to C-terminus: Ribosomal protein uS12 methylthiotransferase RimO (485 aa).

One can recognise an MTTase N-terminal domain in the interval 37–147 (SRIGFVSLGC…VVEQVHEHLP (111 aa)). Residues Cys-46, Cys-82, Cys-111, Cys-179, Cys-183, and Cys-186 each contribute to the [4Fe-4S] cluster site. The 238-residue stretch at 165-402 (LTPRHYAYLK…MEVQGEISAA (238 aa)) folds into the Radical SAM core domain. Positions 405–471 (KARIGNEYQV…EHDVWAVLSE (67 aa)) constitute a TRAM domain.

Belongs to the methylthiotransferase family. RimO subfamily. It depends on [4Fe-4S] cluster as a cofactor.

Its subcellular location is the cytoplasm. It catalyses the reaction L-aspartate(89)-[ribosomal protein uS12]-hydrogen + (sulfur carrier)-SH + AH2 + 2 S-adenosyl-L-methionine = 3-methylsulfanyl-L-aspartate(89)-[ribosomal protein uS12]-hydrogen + (sulfur carrier)-H + 5'-deoxyadenosine + L-methionine + A + S-adenosyl-L-homocysteine + 2 H(+). Its function is as follows. Catalyzes the methylthiolation of an aspartic acid residue of ribosomal protein uS12. This is Ribosomal protein uS12 methylthiotransferase RimO from Alteromonas mediterranea (strain DSM 17117 / CIP 110805 / LMG 28347 / Deep ecotype).